The following is a 386-amino-acid chain: 26S proteasome non-ATPase regulatory subunit 13 homolog B (386 aa).

Residue Ala-2 is modified to N-acetylalanine. The region spanning 174 to 347 (FSEFYKNALL…GTVYVSWAQP (174 aa)) is the PCI domain.

The protein belongs to the proteasome subunit S11 family. In terms of assembly, component of the 19S regulatory particle (RP/PA700) lid subcomplex of the 26S proteasome. The 26S proteasome is composed of a core protease (CP), known as the 20S proteasome, capped at one or both ends by the 19S regulatory particle (RP/PA700). The RP/PA700 complex is composed of at least 17 different subunits in two subcomplexes, the base and the lid, which form the portions proximal and distal to the 20S proteolytic core, respectively. As to expression, ubiquitous with highest expression in flowers.

Functionally, acts as a regulatory subunit of the 26S proteasome which is involved in the ATP-dependent degradation of ubiquitinated proteins. In Arabidopsis thaliana (Mouse-ear cress), this protein is 26S proteasome non-ATPase regulatory subunit 13 homolog B (RPN9B).